A 392-amino-acid polypeptide reads, in one-letter code: Heat-inducible transcription repressor HrcA (392 aa).

The protein belongs to the HrcA family.

Negative regulator of class I heat shock genes (grpE-dnaK-dnaJ and groELS operons). Prevents heat-shock induction of these operons. The polypeptide is Heat-inducible transcription repressor HrcA (Chlamydia trachomatis serovar A (strain ATCC VR-571B / DSM 19440 / HAR-13)).